A 935-amino-acid chain; its full sequence is MSRSPSPDSPPAVRDDEEKDAREQSDSPTSNTDDPKSPSESPKSNRSQESSRKDSRESGKRRDSHEDEKMPLTPPNRSSEASPQHRRHRESRSPSRSRSRSHRSHSRSQYRRSRSRSRDRRSRSRSRDRRSHSRSRDRRSPARRRSPVRAKSPAQAVKPTEEPEKKKNDPKDLLRTRTGGAYIPPAKLRLMQQQITDKSSEQYQRMNWERMKKKIHGLVNRVNAKNLVQIVRELLQENVIRSKGLLCRDIIQAQAFSPGFSNVYAALAAVINSKFPHIGELLLRRLIVQFKRSFRRNDRGVTVNVIKFIAHLINQQVAHEVLALEIMILMLEEPTDDSVEVAIAFLKECGAKLMEIAPAALNSVYDRLRAILMETERSENALDRRIQYMIETAMQIRKDKFAAYPAVVEDLDLIEEEDQIIHTLNLEDAVDPENGLNVFKLDPEFEKNENVYEEIRKEIIGDADISSDEEEEVEDDDEESEAEEAPRKTTEIIDNTDQNLTAFRREVYLTLQSSLDYQEAAHKLLKMKIPDNLQVNVILKFIQKKSEFQNELCAMLVDCCAQQRTYERFYGMLIERFCRLRLEYQQCFEKLCQDTYATVHRIDITKLRNLARLVAHLLSTDAIEWKILADVKMTEEDTTSAGRIYIKFIFMELVEAMGMVKLHTRVTDPTLAHCFVGMFPRTDPQDARFAINFFTMIGLGGLTLELREWLNRGLKKKKGIIDELKAAQSSSDSSSDSSDSSDSSDSSGSSDSSDDSSSSSSSDSSKEPPKKKKKSGTVLKKKETDTNDHKEARGDSRAERRNDEEKLKRRSDEGRRDRSAENREPRRGRDRRDSGDDRHDRGRRDRSKEKEDRGDKRSQRHDSREEDRRERKDRDRRDRSEERDNRRDRKERSRSRDRRDHRDRSRSRERNEKRRHDDDRRREEKVGSDDRRRRH.

Residues 1–179 (MSRSPSPDSP…PKDLLRTRTG (179 aa)) form a disordered region. Composition is skewed to basic and acidic residues over residues 13–25 (VRDD…REQS) and 49–70 (ESSR…DEKM). Residues 84-148 (QHRRHRESRS…RSPARRRSPV (65 aa)) show a composition bias toward basic residues. Over residues 159 to 175 (PTEEPEKKKNDPKDLLR) the composition is skewed to basic and acidic residues. Positions 212 to 400 (KKKIHGLVNR…ETAMQIRKDK (189 aa)) constitute an MIF4G domain. The interval 463–489 (ADISSDEEEEVEDDDEESEAEEAPRKT) is disordered. A compositionally biased stretch (acidic residues) spans 465–483 (ISSDEEEEVEDDDEESEAE). The region spanning 502-633 (AFRREVYLTL…EWKILADVKM (132 aa)) is the MI domain. The segment at 725–935 (KAAQSSSDSS…VGSDDRRRRH (211 aa)) is disordered. Residues 729–763 (SSSDSSSDSSDSSDSSDSSGSSDSSDDSSSSSSSD) show a composition bias toward low complexity. Basic and acidic residues-rich tracts occupy residues 780–891 (KKKE…DRKE) and 897–935 (DRRD…RRRH).

This sequence belongs to the CWC22 family.

Its subcellular location is the nucleus. It is found in the nucleus speckle. Required for early embryogenesis and tissue differentiation. Required for pre-mRNA splicing and for exon-junction complex (EJC) assembly. Hinders EIF4A3 from non-specifically binding RNA and escorts it to the splicing machinery to promote EJC assembly on mature mRNAs. Through its role in EJC assembly, required for nonsense-mediated mRNA decay. The polypeptide is Pre-mRNA-splicing factor CWC22 homolog (Caenorhabditis briggsae).